We begin with the raw amino-acid sequence, 257 residues long: uncharacterized protein (257 aa).

The N-terminal stretch at 1-22 is a signal peptide; that stretch reads MIHSKRLRLWLYLVLLAVFIGA. The N-palmitoyl cysteine moiety is linked to residue C23. Residue C23 is the site of S-diacylglycerol cysteine attachment.

It belongs to the staphylococcal tandem lipoprotein family.

It localises to the cell membrane. This is an uncharacterized protein from Staphylococcus aureus (strain NCTC 8325 / PS 47).